Here is a 410-residue protein sequence, read N- to C-terminus: Probable serine/threonine-protein kinase PBL9 (410 aa).

A lipid anchor (N-myristoyl glycine) is attached at Gly2. Cys4 is lipidated: S-palmitoyl cysteine. A disordered region spans residues 11–46 (AESSGASTKYDAKDIGSLGSKASSVSVRPSPRTEGE). The 285-residue stretch at 68-352 (FRPDSVLGEG…MSEVVSHLEH (285 aa)) folds into the Protein kinase domain. ATP contacts are provided by residues 74–82 (LGEGGFGCV) and Lys106. Position 151 is a phosphotyrosine (Tyr151). Residue Asp203 is the Proton acceptor of the active site. Phosphoserine is present on residues Ser207 and Ser237. Residues Thr238 and Thr243 each carry the phosphothreonine modification. Position 251 is a phosphotyrosine (Tyr251).

This sequence belongs to the protein kinase superfamily. Ser/Thr protein kinase family. In terms of assembly, interacts with the Xanthomonas campestris effector XopAC/AvrAC. As to expression, expressed in stomatal guard cells of leaves.

It localises to the cell membrane. The enzyme catalyses L-seryl-[protein] + ATP = O-phospho-L-seryl-[protein] + ADP + H(+). It catalyses the reaction L-threonyl-[protein] + ATP = O-phospho-L-threonyl-[protein] + ADP + H(+). Possible bi-functional kinase. In vitro, it exhibits serine/threonine activity. In vivo, can phosphorylate tyrosine residues of limited substrates. May be involved in plant defense signaling. The sequence is that of Probable serine/threonine-protein kinase PBL9 from Arabidopsis thaliana (Mouse-ear cress).